Reading from the N-terminus, the 193-residue chain is dCTP deaminase, dUMP-forming (193 aa).

Residues 101–106 (KSSLGR), Asp-119, 127–129 (TLE), Gln-148, Tyr-162, and Gln-174 contribute to the dCTP site. Glu-129 serves as the catalytic Proton donor/acceptor. Residues 162–184 (YGSKGTGSHYQGQRGPTPSRSYE) are disordered. Residues 167–183 (TGSHYQGQRGPTPSRSY) show a composition bias toward polar residues.

It belongs to the dCTP deaminase family. In terms of assembly, homotrimer.

The enzyme catalyses dCTP + 2 H2O = dUMP + NH4(+) + diphosphate. It participates in pyrimidine metabolism; dUMP biosynthesis; dUMP from dCTP: step 1/1. Functionally, bifunctional enzyme that catalyzes both the deamination of dCTP to dUTP and the hydrolysis of dUTP to dUMP without releasing the toxic dUTP intermediate. This Bifidobacterium longum (strain DJO10A) protein is dCTP deaminase, dUMP-forming.